The primary structure comprises 78 residues: Acyl carrier protein (78 aa).

Residues 2 to 77 (STIEERVKKI…AAIDYINGHQ (76 aa)) form the Carrier domain. Position 37 is an O-(pantetheine 4'-phosphoryl)serine (serine 37).

It belongs to the acyl carrier protein (ACP) family. In terms of processing, 4'-phosphopantetheine is transferred from CoA to a specific serine of apo-ACP by AcpS. This modification is essential for activity because fatty acids are bound in thioester linkage to the sulfhydryl of the prosthetic group.

Its subcellular location is the cytoplasm. It functions in the pathway lipid metabolism; fatty acid biosynthesis. Functionally, carrier of the growing fatty acid chain in fatty acid biosynthesis. This Shigella flexneri protein is Acyl carrier protein.